The primary structure comprises 224 residues: UPF0758 protein NE1464 (224 aa).

Residues 102–224 form the MPN domain; it reads IMDSPQSVRN…VVSFAERGLI (123 aa). Zn(2+)-binding residues include H173, H175, and D186. A JAMM motif motif is present at residues 173 to 186; sequence HNHPSGIAEPSTAD.

This sequence belongs to the UPF0758 family.

The chain is UPF0758 protein NE1464 from Nitrosomonas europaea (strain ATCC 19718 / CIP 103999 / KCTC 2705 / NBRC 14298).